The following is a 496-amino-acid chain: Lysine--tRNA ligase (496 aa).

E409 and E416 together coordinate Mg(2+).

Belongs to the class-II aminoacyl-tRNA synthetase family. In terms of assembly, homodimer. Mg(2+) serves as cofactor.

It is found in the cytoplasm. It catalyses the reaction tRNA(Lys) + L-lysine + ATP = L-lysyl-tRNA(Lys) + AMP + diphosphate. The chain is Lysine--tRNA ligase from Streptococcus pneumoniae serotype 19F (strain G54).